The sequence spans 172 residues: Ribosome maturation factor RimM (172 aa).

The PRC barrel domain occupies 96–170 (EENEFYFHEI…KITIEVMEGL (75 aa)).

Belongs to the RimM family. Binds ribosomal protein uS19.

It is found in the cytoplasm. Its function is as follows. An accessory protein needed during the final step in the assembly of 30S ribosomal subunit, possibly for assembly of the head region. Essential for efficient processing of 16S rRNA. May be needed both before and after RbfA during the maturation of 16S rRNA. It has affinity for free ribosomal 30S subunits but not for 70S ribosomes. This is Ribosome maturation factor RimM from Listeria monocytogenes serotype 4b (strain CLIP80459).